A 432-amino-acid polypeptide reads, in one-letter code: Ribosomal protein uS12 methylthiotransferase RimO (432 aa).

The region spanning 4–122 is the MTTase N-terminal domain; the sequence is NKVDIITLGC…LISDLGKSYH (119 aa). 6 residues coordinate [4Fe-4S] cluster: Cys-13, Cys-51, Cys-85, Cys-146, Cys-150, and Cys-153. One can recognise a Radical SAM core domain in the interval 132–363; it reads TTPRHYAYVK…MRVQEGISAD (232 aa). The 67-residue stretch at 366 to 432 folds into the TRAM domain; the sequence is ASKVGQTFRV…AFDLYGKVLN (67 aa).

Belongs to the methylthiotransferase family. RimO subfamily. It depends on [4Fe-4S] cluster as a cofactor.

The protein localises to the cytoplasm. It carries out the reaction L-aspartate(89)-[ribosomal protein uS12]-hydrogen + (sulfur carrier)-SH + AH2 + 2 S-adenosyl-L-methionine = 3-methylsulfanyl-L-aspartate(89)-[ribosomal protein uS12]-hydrogen + (sulfur carrier)-H + 5'-deoxyadenosine + L-methionine + A + S-adenosyl-L-homocysteine + 2 H(+). Functionally, catalyzes the methylthiolation of an aspartic acid residue of ribosomal protein uS12. This is Ribosomal protein uS12 methylthiotransferase RimO from Parabacteroides distasonis (strain ATCC 8503 / DSM 20701 / CIP 104284 / JCM 5825 / NCTC 11152).